Here is a 126-residue protein sequence, read N- to C-terminus: Fumarate reductase subunit C (126 aa).

Helical transmembrane passes span 30–50 (IFVA…GAGG), 64–84 (VVVV…VTWF), and 105–125 (VLAG…WMVL).

Belongs to the FrdC family. As to quaternary structure, part of an enzyme complex containing four subunits: a flavoprotein (FrdA), an iron-sulfur protein (FrdB), and two hydrophobic anchor proteins (FrdC and FrdD).

The protein resides in the cell membrane. Its function is as follows. Anchors the catalytic components of the fumarate reductase complex to the cell membrane, binds quinones. The protein is Fumarate reductase subunit C of Mycobacterium tuberculosis (strain ATCC 25177 / H37Ra).